A 290-amino-acid polypeptide reads, in one-letter code: Inositol-1-monophosphatase (290 aa).

Glutamate 83, aspartate 104, isoleucine 106, and aspartate 107 together coordinate Mg(2+). Glutamate 83 contributes to the substrate binding site. Residues 106 to 109, arginine 206, and aspartate 235 each bind substrate; that span reads IDGT. Aspartate 235 is a Mg(2+) binding site.

It belongs to the inositol monophosphatase superfamily. Requires Mg(2+) as cofactor.

The catalysed reaction is a myo-inositol phosphate + H2O = myo-inositol + phosphate. This Mycobacterium bovis (strain ATCC BAA-935 / AF2122/97) protein is Inositol-1-monophosphatase (suhB).